A 689-amino-acid polypeptide reads, in one-letter code: Glycine--tRNA ligase beta subunit (689 aa).

The protein belongs to the class-II aminoacyl-tRNA synthetase family. Tetramer of two alpha and two beta subunits.

Its subcellular location is the cytoplasm. The enzyme catalyses tRNA(Gly) + glycine + ATP = glycyl-tRNA(Gly) + AMP + diphosphate. The polypeptide is Glycine--tRNA ligase beta subunit (Shigella boydii serotype 4 (strain Sb227)).